The primary structure comprises 213 residues: Nucleoside triphosphate pyrophosphatase (213 aa).

Residue Asp77 is the Proton acceptor of the active site.

This sequence belongs to the Maf family. It depends on a divalent metal cation as a cofactor.

Its subcellular location is the cytoplasm. It carries out the reaction a ribonucleoside 5'-triphosphate + H2O = a ribonucleoside 5'-phosphate + diphosphate + H(+). The enzyme catalyses a 2'-deoxyribonucleoside 5'-triphosphate + H2O = a 2'-deoxyribonucleoside 5'-phosphate + diphosphate + H(+). Nucleoside triphosphate pyrophosphatase. May have a dual role in cell division arrest and in preventing the incorporation of modified nucleotides into cellular nucleic acids. The protein is Nucleoside triphosphate pyrophosphatase of Cutibacterium acnes (strain DSM 16379 / KPA171202) (Propionibacterium acnes).